Consider the following 258-residue polypeptide: Acyl-[acyl-carrier-protein]--UDP-N-acetylglucosamine O-acyltransferase (258 aa).

Belongs to the transferase hexapeptide repeat family. LpxA subfamily. As to quaternary structure, homotrimer.

It is found in the cytoplasm. It catalyses the reaction a (3R)-hydroxyacyl-[ACP] + UDP-N-acetyl-alpha-D-glucosamine = a UDP-3-O-[(3R)-3-hydroxyacyl]-N-acetyl-alpha-D-glucosamine + holo-[ACP]. Its pathway is glycolipid biosynthesis; lipid IV(A) biosynthesis; lipid IV(A) from (3R)-3-hydroxytetradecanoyl-[acyl-carrier-protein] and UDP-N-acetyl-alpha-D-glucosamine: step 1/6. Its function is as follows. Involved in the biosynthesis of lipid A, a phosphorylated glycolipid that anchors the lipopolysaccharide to the outer membrane of the cell. In Pseudomonas aeruginosa (strain LESB58), this protein is Acyl-[acyl-carrier-protein]--UDP-N-acetylglucosamine O-acyltransferase.